The sequence spans 228 residues: Deoxyribose-phosphate aldolase (228 aa).

The Proton donor/acceptor role is filled by aspartate 96. Lysine 157 (schiff-base intermediate with acetaldehyde) is an active-site residue. Lysine 185 acts as the Proton donor/acceptor in catalysis.

Belongs to the DeoC/FbaB aldolase family. DeoC type 1 subfamily.

It localises to the cytoplasm. It carries out the reaction 2-deoxy-D-ribose 5-phosphate = D-glyceraldehyde 3-phosphate + acetaldehyde. Its pathway is carbohydrate degradation; 2-deoxy-D-ribose 1-phosphate degradation; D-glyceraldehyde 3-phosphate and acetaldehyde from 2-deoxy-alpha-D-ribose 1-phosphate: step 2/2. Catalyzes a reversible aldol reaction between acetaldehyde and D-glyceraldehyde 3-phosphate to generate 2-deoxy-D-ribose 5-phosphate. The sequence is that of Deoxyribose-phosphate aldolase from Cyanothece sp. (strain PCC 7425 / ATCC 29141).